The chain runs to 232 residues: MDNFNVVANEDNQVNDVKPPPPPPRVCARCDSDNTKFCYYNNYSEFQPRYFCKNCRRYWTHGGALRNVPIGGSSRAKRTRINQPSVAQMVSVGIQPGSHKPFFNVQENNDFVGSFGASSSSFVAAVGNRFSSLSHIHGGMVTNVHPTQTFRPNHRLAFHNGSFEQDYYDVGSDNLLVNQQVGGYVDNHNGYHMNQVDQYNWNQSFNNAMNMNYNNASTSGRMHPSHLEKGGP.

Residues 25 to 79 (RVCARCDSDNTKFCYYNNYSEFQPRYFCKNCRRYWTHGGALRNVPIGGSSRAKRT) form a Dof-type zinc finger. Cys27, Cys30, Cys52, and Cys55 together coordinate Zn(2+).

The protein resides in the nucleus. Its function is as follows. Transcription factor that binds specifically to a 5'-AA[AG]G-3' consensus core sequence. The chain is Dof zinc finger protein DOF4.3 (DOF4.3) from Arabidopsis thaliana (Mouse-ear cress).